Reading from the N-terminus, the 923-residue chain is Transportin-3 (923 aa).

Position 1 is an N-acetylmethionine (M1). Phosphoserine is present on S74. The residue at position 896 (T896) is a Phosphothreonine.

As to quaternary structure, interacts with (GTP-bound) Ran. Interacts with (phosphorylated) SFRS1 and SFRS2; leading to their nuclear import. Interacts with NUP62. Interacts with RBM4. Interacts with CPSF6, promoting its nuclear import. In terms of assembly, (Microbial infection) Interacts with the HIV-1 pre-integration complex (PIC), which is composed of viral genome, matrix protein, Vpr and integrase. Interacts with HIV-1 integrase protein; the interaction is direct. As to expression, expressed in skeletal muscle.

The protein localises to the nucleus envelope. Its subcellular location is the cytoplasm. Its function is as follows. Importin, which transports target proteins into the nucleus. Specifically mediates the nuclear import of splicing factor serine/arginine (SR) proteins, such as RBM4, SFRS1 and SFRS2, by recognizing phosphorylated SR domains. Also mediates the nuclear import of serine/arginine (SR) protein CPSF6, independently of CPSF6 phosphorylation. The nuclear import process is regulated by the small GTPase Ran that partitions between cytoplasm and nucleus in the predominantly GDP- and GTP-bound form, respectively. Importin associates with target cargo proteins in the cytoplasm, and the competitive binding of GTP-bound Ran induces the release of cargos in the nucleus. (Microbial infection) Involved in immunodeficiency virus (HIV-1) infection by importing the pre-integration complex (PIC) into the nucleus. Required for a nuclear maturation step of HIV-1 prior to integration. In Homo sapiens (Human), this protein is Transportin-3.